The sequence spans 396 residues: Ribosomal RNA large subunit methyltransferase I (396 aa).

The PUA domain maps to 2–81 (SVRLVLAKGR…ESIDIAFFSR (80 aa)).

It belongs to the methyltransferase superfamily. RlmI family.

The protein resides in the cytoplasm. The enzyme catalyses cytidine(1962) in 23S rRNA + S-adenosyl-L-methionine = 5-methylcytidine(1962) in 23S rRNA + S-adenosyl-L-homocysteine + H(+). Specifically methylates the cytosine at position 1962 (m5C1962) of 23S rRNA. The protein is Ribosomal RNA large subunit methyltransferase I of Shigella boydii serotype 4 (strain Sb227).